Consider the following 607-residue polypeptide: MILLTFSTGRRLDFVHHSGVFFLQTLLWILCATVCGTEQYFNVEVWLQKYGYLPPTDPRMSVLRSAETMQSALAAMQQFYGINMTGKVDRNTIDWMKKPRCGVPDQTRGSSKFHIRRKRYALTGQKWQHKHITYSIKNVTPKVGDPETRKAIRRAFDVWQNVTPLTFEEVPYSELENGKRDVDITIIFASGFHGDSSPFDGEGGFLAHAYFPGPGIGGDTHFDSDEPWTLGNPNHDGNDLFLVAVHELGHALGLEHSNDPTAIMAPFYQYMETDNFKLPNDDLQGIQKIYGPPDKIPPPTRPLPTVPPHRSIPPADPRKNDRPKPPRPPTGRPSYPGAKPNICDGNFNTLAILRREMFVFKDQWFWRVRNNRVMDGYPMQITYFWRGLPPSIDAVYENSDGNFVFFKGNKYWVFKDTTLQPGYPHDLITLGSGIPPHGIDSAIWWEDVGKTYFFKGDRYWRYSEEMKTMDPGYPKPITVWKGIPESPQGAFVHKENGFTYFYKGKEYWKFNNQILKVEPGYPRSILKDFMGCDGPTDRVKEGHSPPDDVDIVIKLDNTASTVKAIAIVIPCILALCLLVLVYTVFQFKRKGTPRHILYCKRSMQEWV.

The N-terminal stretch at 1–31 is a signal peptide; the sequence is MILLTFSTGRRLDFVHHSGVFFLQTLLWILC. The propeptide occupies 32-119; it reads ATVCGTEQYF…SSKFHIRRKR (88 aa). N83 carries an N-linked (GlcNAc...) asparagine glycan. The short motif at 99 to 106 is the Cysteine switch element; that stretch reads PRCGVPDQ. C101 is a Zn(2+) binding site. Topologically, residues 120–564 are extracellular; the sequence is YALTGQKWQH…LDNTASTVKA (445 aa). Residue D183 coordinates Ca(2+). Residues H193 and D195 each contribute to the Zn(2+) site. D200, G201, G203, and F205 together coordinate Ca(2+). Position 208 (H208) interacts with Zn(2+). Ca(2+) contacts are provided by G215, G217, and D219. H221 contributes to the Zn(2+) binding site. Ca(2+)-binding residues include D223 and E226. Residue H246 participates in Zn(2+) binding. The active site involves E247. Residues H250 and H256 each coordinate Zn(2+). Residues 281-340 are disordered; sequence DDLQGIQKIYGPPDKIPPPTRPLPTVPPHRSIPPADPRKNDRPKPPRPPTGRPSYPGAKP. Over residues 294–315 the composition is skewed to pro residues; that stretch reads DKIPPPTRPLPTVPPHRSIPPA. 4 Hemopexin repeats span residues 340–388, 389–434, 436–484, and 485–532; these read PNIC…WRGL, PPSI…GSGI, PHGI…KGIP, and ESPQ…FMGC. A disulfide bond links C343 and C532. Residues 565–585 traverse the membrane as a helical segment; it reads IAIVIPCILALCLLVLVYTVF. Residues 586 to 607 lie on the Cytoplasmic side of the membrane; the sequence is QFKRKGTPRHILYCKRSMQEWV.

The protein belongs to the peptidase M10A family. In terms of assembly, interacts with CSPG4 through CSPG4 chondroitin sulfate glycosaminoglycan. The cofactor is Zn(2+). It depends on Ca(2+) as a cofactor. Post-translationally, the precursor is cleaved by a furin endopeptidase. In terms of tissue distribution, expressed in heart, brain, placenta, ovary and small intestine. Isoform Short is found in the ovary.

It is found in the cell membrane. It localises to the secreted. The protein localises to the extracellular space. The protein resides in the extracellular matrix. Its subcellular location is the cell surface. With respect to regulation, TIMP-2 shows little inhibitory activity compared to TIMP-1. TIMP-1 seems to have less binding affinity than TIMP-2 for the short isoform. In terms of biological role, endopeptidase that degrades various components of the extracellular matrix, such as collagen type III and fibronectin. Activates progelatinase A. Involved in the matrix remodeling of blood vessels. Isoform short cleaves fibronectin and also collagen type III, but at lower rate. It has no effect on type I, II, IV and V collagen. However, upon interaction with CSPG4, it may be involved in degradation and invasion of type I collagen by melanoma cells. This Homo sapiens (Human) protein is Matrix metalloproteinase-16.